The sequence spans 629 residues: (-)-alpha pinene synthase 1, chloroplastic (629 aa).

Residues 1-48 (MSPVSVISLPSDLCLPTSFIDRSGRELNPLHITIPNVAMRRQGKLMTR) constitute a chloroplast transit peptide. Mg(2+) contacts are provided by Asp-380, Asp-384, and Asp-532. The DDXXD motif motif lies at 380-384 (DDMYD).

It belongs to the terpene synthase family. Tpsd subfamily. Mg(2+) is required as a cofactor. Requires Mn(2+) as cofactor.

It is found in the plastid. The protein localises to the chloroplast. The enzyme catalyses (2E)-geranyl diphosphate = (1S,5S)-alpha-pinene + diphosphate. The catalysed reaction is (2E)-geranyl diphosphate = (1S,5S)-beta-pinene + diphosphate. Its pathway is terpene metabolism; oleoresin biosynthesis. It participates in secondary metabolite biosynthesis; terpenoid biosynthesis. Functionally, monoterpene synthase (TPS) involved in the biosynthesis of monoterpene natural products included in conifer oleoresin secretions and volatile emissions; these compounds contribute to biotic and abiotic stress defense against herbivores and pathogens. Catalyzes the conversion of (2E)-geranyl diphosphate (GPP) to (-)-alpha-pinene and, to a lower extent, to (-)-beta-pinene. The protein is (-)-alpha pinene synthase 1, chloroplastic of Pinus contorta (Shore pine).